Consider the following 257-residue polypeptide: Cytochrome b561 domain-containing protein At2g30890 (257 aa).

An N-terminal signal peptide occupies residues 1–21 (MEIHHQLLVSLLFLLLPLCSS). Residues 22 to 219 (QENTRSLAID…LFQDKWSYIQ (198 aa)) form the Cytochrome b561 domain. 5 helical membrane passes run 55–75 (VHGF…IISI), 91–111 (LFFL…IGAV), 125–145 (HQQL…LGFL), 157–177 (WFVG…INIY), and 191–211 (ANLW…VYLF). 4 residues coordinate heme b: His-56, His-95, His-125, and His-161. The disordered stretch occupies residues 235–257 (NISTAETGHGYEVEESKPELEKC). A compositionally biased stretch (basic and acidic residues) spans 243 to 257 (HGYEVEESKPELEKC).

It depends on heme b as a cofactor.

The protein localises to the membrane. The chain is Cytochrome b561 domain-containing protein At2g30890 from Arabidopsis thaliana (Mouse-ear cress).